A 374-amino-acid chain; its full sequence is Peptide chain release factor 2 (374 aa).

Residue Q250 is modified to N5-methylglutamine.

The protein belongs to the prokaryotic/mitochondrial release factor family. In terms of processing, methylated by PrmC. Methylation increases the termination efficiency of RF2.

It is found in the cytoplasm. In terms of biological role, peptide chain release factor 2 directs the termination of translation in response to the peptide chain termination codons UGA and UAA. This Beutenbergia cavernae (strain ATCC BAA-8 / DSM 12333 / CCUG 43141 / JCM 11478 / NBRC 16432 / NCIMB 13614 / HKI 0122) protein is Peptide chain release factor 2.